The sequence spans 313 residues: Aspartoacylase (313 aa).

Zn(2+) contacts are provided by histidine 21 and glutamate 24. Residues arginine 63, asparagine 70, and arginine 71 each coordinate N-acetyl-L-aspartate. Histidine 116 is a binding site for Zn(2+). 2 residues coordinate N-acetyl-L-aspartate: tyrosine 164 and arginine 168. Glutamate 178 functions as the Proton donor/acceptor in the catalytic mechanism. Tyrosine 288 provides a ligand contact to N-acetyl-L-aspartate.

The protein belongs to the AspA/AstE family. Aspartoacylase subfamily. Homodimer. Zn(2+) serves as cofactor.

It localises to the cytoplasm. Its subcellular location is the nucleus. It carries out the reaction an N-acyl-L-aspartate + H2O = a carboxylate + L-aspartate. The enzyme catalyses N-acetyl-L-aspartate + H2O = L-aspartate + acetate. Catalyzes the deacetylation of N-acetylaspartic acid (NAA) to produce acetate and L-aspartate. NAA occurs in high concentration in brain and its hydrolysis NAA plays a significant part in the maintenance of intact white matter. In other tissues it acts as a scavenger of NAA from body fluids. The sequence is that of Aspartoacylase from Pongo abelii (Sumatran orangutan).